A 258-amino-acid polypeptide reads, in one-letter code: Leucine-rich repeat-containing protein 3B (258 aa).

A signal peptide spans 1 to 33 (MTPLDLWLSRSIPMCLLLQSLVLMVLCFPSAST). One can recognise an LRRNT domain in the interval 34–68 (CPKGCTCQRSESPPHGLNVTCSLSRLKEIPPDVPP). Asn51 carries N-linked (GlcNAc...) asparagine glycosylation. 3 LRR repeats span residues 69-90 (DTQLLQLDRNHISLVPDRIFHG), 93-114 (MLRRLNLSHNAVETLGEGAFIG), and 118-139 (SLEVLDLSYNRITSVHKDAFAR). N-linked (GlcNAc...) asparagine glycosylation is present at Asn98. An LRRCT domain is found at 149-196 (NPWHCDCALQQALGGMAHNHERVLCRSSELRDQEGQPFMAVDADLCNL). The chain crosses the membrane as a helical span at residues 204–224 (AMLVTMFGWFAMVISYVVYYV).

This sequence belongs to the LRRC3 family.

It localises to the membrane. The chain is Leucine-rich repeat-containing protein 3B (lrrc3b) from Danio rerio (Zebrafish).